The following is an 849-amino-acid chain: Aminopeptidase N (849 aa).

Substrate contacts are provided by residues glutamate 122 and 259-263 (GAMEN). Residue histidine 294 participates in Zn(2+) binding. Catalysis depends on glutamate 295, which acts as the Proton acceptor. Zn(2+)-binding residues include histidine 298 and glutamate 317.

The protein belongs to the peptidase M1 family. As to quaternary structure, monomer. The cofactor is Zn(2+).

The protein localises to the cytoplasm. It catalyses the reaction Release of an N-terminal amino acid, Xaa-|-Yaa- from a peptide, amide or arylamide. Xaa is preferably Ala, but may be most amino acids including Pro (slow action). When a terminal hydrophobic residue is followed by a prolyl residue, the two may be released as an intact Xaa-Pro dipeptide.. Functionally, aminopeptidase with broad substrate specificity to several peptides. It has more affinity for oligopeptides than for dipeptides. It plays an essential role in the metabolism, it may be involved in nitrogen supply or protein turnover. This is Aminopeptidase N (pepN) from Lactococcus lactis subsp. lactis (Streptococcus lactis).